The primary structure comprises 435 residues: UDP-N-acetylmuramate--L-alanine ligase (435 aa).

Residue 108 to 114 (GAHGKST) coordinates ATP.

The protein belongs to the MurCDEF family.

It localises to the cytoplasm. The catalysed reaction is UDP-N-acetyl-alpha-D-muramate + L-alanine + ATP = UDP-N-acetyl-alpha-D-muramoyl-L-alanine + ADP + phosphate + H(+). Its pathway is cell wall biogenesis; peptidoglycan biosynthesis. Its function is as follows. Cell wall formation. This Campylobacter curvus (strain 525.92) protein is UDP-N-acetylmuramate--L-alanine ligase.